Reading from the N-terminus, the 941-residue chain is RNA-directed RNA polymerase (941 aa).

Residues 875–918 are disordered; the sequence is SARQGGMGLPPPPPPPLGGGGMAGPPPPPFMGLRPESSVPTSVP. Residues 905–918 show a composition bias toward low complexity; that stretch reads MGLRPESSVPTSVP.

As to quaternary structure, forms a ribonucleoprotein complex with the 23S RNA, where a single polymerase molecule binds to a single viral RNA genome. Since the viral RNA is not encapsidated, ribonucleoprotein complex formation appears to be the strategy to survive in the host as persistent virus.

It localises to the host cytoplasm. It catalyses the reaction RNA(n) + a ribonucleoside 5'-triphosphate = RNA(n+1) + diphosphate. In terms of biological role, RNA-directed RNA polymerase that replicates the viral (+) and (-) genome. This Saccharomyces 23S RNA narnavirus (ScNV-23S) protein is RNA-directed RNA polymerase.